A 120-amino-acid polypeptide reads, in one-letter code: Ribonuclease P protein component (120 aa).

It belongs to the RnpA family. As to quaternary structure, consists of a catalytic RNA component (M1 or rnpB) and a protein subunit.

The enzyme catalyses Endonucleolytic cleavage of RNA, removing 5'-extranucleotides from tRNA precursor.. In terms of biological role, RNaseP catalyzes the removal of the 5'-leader sequence from pre-tRNA to produce the mature 5'-terminus. It can also cleave other RNA substrates such as 4.5S RNA. The protein component plays an auxiliary but essential role in vivo by binding to the 5'-leader sequence and broadening the substrate specificity of the ribozyme. The protein is Ribonuclease P protein component of Mycobacterium marinum (strain ATCC BAA-535 / M).